The sequence spans 189 residues: NADH-quinone oxidoreductase subunit B (189 aa).

[4Fe-4S] cluster is bound by residues Cys-39, Cys-40, Cys-104, and Cys-135.

It belongs to the complex I 20 kDa subunit family. In terms of assembly, NDH-1 is composed of 14 different subunits. Subunits NuoB, C, D, E, F, and G constitute the peripheral sector of the complex. Requires [4Fe-4S] cluster as cofactor.

The protein localises to the cell inner membrane. It carries out the reaction a quinone + NADH + 5 H(+)(in) = a quinol + NAD(+) + 4 H(+)(out). Functionally, NDH-1 shuttles electrons from NADH, via FMN and iron-sulfur (Fe-S) centers, to quinones in the respiratory chain. The immediate electron acceptor for the enzyme in this species is believed to be a menaquinone. Couples the redox reaction to proton translocation (for every two electrons transferred, four hydrogen ions are translocated across the cytoplasmic membrane), and thus conserves the redox energy in a proton gradient. The protein is NADH-quinone oxidoreductase subunit B of Pelodictyon phaeoclathratiforme (strain DSM 5477 / BU-1).